The sequence spans 562 residues: Protein KASH5 (562 aa).

Residues 1 to 521 (MDLPEGPVGG…PQRLRVTRHP (521 aa)) lie on the Cytoplasmic side of the membrane. The tract at residues 125 to 153 (ALTSRQLPSGCPEAEEPANLESFGGEDPR) is disordered. A coiled-coil region spans residues 164 to 349 (SSLEDLELSN…LEEQLSQTYE (186 aa)). Residues 407–481 (ETSEETEFPS…DIPENPPERP (75 aa)) are disordered. The segment covering 431 to 448 (AHPEEGRKEPSMWLTRRE) has biased composition (basic and acidic residues). The helical; Anchor for type IV membrane protein transmembrane segment at 522–542 (LIPAPVLGLLLLLLLSVLLLG) threads the bilayer. An interaction with SUN1 region spans residues 541–562 (LGPSPPPTWPHLQLCYLQPPPV). The Perinuclear space segment spans residues 543–562 (PSPPPTWPHLQLCYLQPPPV).

As to quaternary structure, core component the LINC complex which is composed of inner nuclear membrane SUN domain-containing proteins coupled to outer nuclear membrane KASH domain-containing nesprins. SUN and KASH domain-containing proteins seem to bind each other promiscuously; however, differentially expression of LINC complex constituents is giving rise to specific assemblies. At least SUN1/2-containing core LINC complexes are proposed to be hexameric composed of three protomers of each KASH and SUN domain-containing protein. Interacts with SUN1; this interaction mediates its telomere localization by forming a SUN1:KASH5 LINC complex. Component of a probable SUN2:KASH5 LINC complex. Self-associates. Interacts with DYNC1H1, DCTN1, DYNC1I1/2 and PAFAH1B1; suggesting the association with the dynein-dynactin motor complex. In terms of tissue distribution, expressed in testis (at protein level).

The protein localises to the nucleus outer membrane. Its subcellular location is the nucleus. It localises to the chromosome. It is found in the telomere. The protein resides in the nucleus envelope. Its function is as follows. As a component of the LINC (LInker of Nucleoskeleton and Cytoskeleton) complex, involved in the connection between the nuclear lamina and the cytoskeleton. The nucleocytoplasmic interactions established by the LINC complex play an important role in the transmission of mechanical forces across the nuclear envelope and in nuclear movement and positioning. Required for telomere attachment to nuclear envelope in the prophase of meiosis. Required for rapid telomere prophase movements implicating a SUN1/2:KASH5 LINC complex in which SUN1 and SUN2 seem to act at least partial redundantly. Required for homolog pairing during meiotic prophase in spermatocytes and probably oocytes. Essential for male and female gametogenesis. Recruits cytoplasmic dynein to telomere attachment sites at the nuclear envelope in spermatocytes. In oocytes is involved in meiotic resumption and spindle formation. This chain is Protein KASH5, found in Homo sapiens (Human).